Here is a 103-residue protein sequence, read N- to C-terminus: Small ribosomal subunit protein uS10 (103 aa).

This sequence belongs to the universal ribosomal protein uS10 family. As to quaternary structure, part of the 30S ribosomal subunit.

Its function is as follows. Involved in the binding of tRNA to the ribosomes. The sequence is that of Small ribosomal subunit protein uS10 from Bordetella parapertussis (strain 12822 / ATCC BAA-587 / NCTC 13253).